The chain runs to 884 residues: MSFLEDLELNFAECIQDGGKATLGVRQREEMDTTHCMKQNEIISQAVCALLNSGGGVVRVEIENGDYNFERDGVGLNLPPLFRNHLDEMLYGKLFLIYVSSWDVAASHVRLATLCSNLYHRCGTFTEVMDPEKALKFLKRVQDPRILGDSDSLNLQEAPVDDAQMILASDLFHSPQLQYLEKLNFTKSSHVEFQMFSADLSQGIRERLPKCVSALANSEGGYVFFGVHDETRHVIGCEKEKINCTNLKSTIDACIRKMPVYHFCGQNHKVQYELKFLEVYDKEALHGYVCAIKVERFCCAAFAKAPDSWEIKDNNKKPLTANDWASRMIEINPDLSSFPQMIPWKSMLNTTPCSKTVFTHKYLKCVEDLQKDYFPVSPNRITYTPESVYKDLFADYRGLRNLINMEMRCFSQGILIFSHSWAVDLGLQRRQDVICDALLISPNNVPILYTICNKWDLGNRHYSMKVARTLKQKLVNMGGYPGRLGIIPLVLPLGSHQRVRNDLEMPVYPESYNFITTQQVEALLQSLVIILFGFRPLLNEELNLESETVALLSDQQYGLLSTNLSKHREMFVHGLPGSGKTTLALMIVGKIRNVFNCQADNILYICENQSLKRFIVRKNVCQAVTRKTFMKNTFDNVQHIIVDEAQNFRTEDGNWYAKAKAITQRARDGPGVLYIFLDYFQINHLCCSGLPELQHQKPLLKLTRMLRSGDNITSYLQDIMHQIRENPPPNVPQEALMVGEELEWGPDVTGNLEITDNLNLEQMSVYVAEKCQSLWRSGYFTDVAVLFTRARDIEKCRDKLLLAMRRRSMSQLAEEPSLLVQVREGLDSLGSHVVLESVHRFSGMERSIVFGIIPMGSETAIFYNALLCLASRARTHLYIVKVVF.

574–581 (GLPGSGKT) is an ATP binding site.

It belongs to the Schlafen family. Subgroup III subfamily.

Functionally, may have a role in hematopoietic cell differentiation. The polypeptide is Schlafen family member 5 (Slfn5) (Mus musculus (Mouse)).